The following is a 333-amino-acid chain: Mitochondrial thiamine pyrophosphate carrier 1 (333 aa).

3 Solcar repeats span residues 12–115 (GSRL…ITQF), 129–215 (PPSV…LRPR), and 222–318 (PYSS…ALKL). Transmembrane regions (helical) follow at residues 17–35 (VTAA…IAPL), 96–112 (LLYV…YRSI), 135–155 (FIAG…LDLL), 190–209 (GLGP…FCVY), 221–238 (LPYS…SVMA), and 293–310 (GLTV…VTMW).

This sequence belongs to the mitochondrial carrier (TC 2.A.29) family.

The protein localises to the mitochondrion inner membrane. In terms of biological role, mitochondrial transporter that mediates uptake of thiamine pyrophosphate (ThPP) into mitochondria. The chain is Mitochondrial thiamine pyrophosphate carrier 1 (tpc-1) from Neurospora crassa (strain ATCC 24698 / 74-OR23-1A / CBS 708.71 / DSM 1257 / FGSC 987).